The following is a 520-amino-acid chain: ADP,ATP carrier protein 4 (520 aa).

The next 12 helical transmembrane spans lie at 43–63, 80–100, 111–131, 166–186, 201–221, 240–260, 305–325, 339–359, 370–390, 399–419, 462–482, and 485–505; these read LSKFLFITLLMFCILFIQNLI, ISFLKFWGVMPCAFLMTAIYV, IFYLIISIFLAFFALFAYVIF, FSLFYIIAELWPNVAFALLFW, FYPLFGLLSQTGIYLAGQFLE, FHTLSVQIILTIVLILGIVGI, LIATLLICYGIAINLVEGPWK, AAFIGNYLSYTGAFTILFVVL, FTAAIITPIIVFTTGILFFAV, LIVASFILTDPALIAITIGAI, LGKSGSAFLQSLVFIILPSAS, and SISVCLMFIFIITCLIWFWAV.

The protein belongs to the ADP/ATP translocase tlc family.

The protein resides in the cell membrane. In terms of biological role, provides the rickettsial cell with host ATP in exchange for rickettsial ADP. This is an obligate exchange system. This energy acquiring activity is an important component of rickettsial parasitism. The protein is ADP,ATP carrier protein 4 (tlcD) of Rickettsia bellii (strain RML369-C).